The sequence spans 227 residues: ATP-dependent dethiobiotin synthetase BioD (227 aa).

An ATP-binding site is contributed by 13–18 (DIGKTY). Residue Thr-17 participates in Mg(2+) binding. Residue Lys-38 is part of the active site. Position 42 (Ser-42) interacts with substrate. ATP-binding positions include Asp-55, 116-119 (EGSG), and 179-180 (NN). Mg(2+)-binding residues include Asp-55 and Glu-116.

This sequence belongs to the dethiobiotin synthetase family. In terms of assembly, homodimer. Mg(2+) is required as a cofactor.

Its subcellular location is the cytoplasm. The catalysed reaction is (7R,8S)-7,8-diammoniononanoate + CO2 + ATP = (4R,5S)-dethiobiotin + ADP + phosphate + 3 H(+). It participates in cofactor biosynthesis; biotin biosynthesis; biotin from 7,8-diaminononanoate: step 1/2. Functionally, catalyzes a mechanistically unusual reaction, the ATP-dependent insertion of CO2 between the N7 and N8 nitrogen atoms of 7,8-diaminopelargonic acid (DAPA, also called 7,8-diammoniononanoate) to form a ureido ring. The protein is ATP-dependent dethiobiotin synthetase BioD of Clostridium botulinum (strain Kyoto / Type A2).